The sequence spans 581 residues: Sabinene synthase 1, chloroplastic (581 aa).

Residues 1–28 (MPLNSLHNLERKPSKAWSTSCTAPAARL) constitute a chloroplast transit peptide. Positions 297, 334, 338, 475, and 478 each coordinate (2E)-geranyl diphosphate. The Mg(2+) site is built by aspartate 334 and aspartate 338. The DDXXD motif motif lies at 334-338 (DDVYD). The Mg(2+) site is built by aspartate 478, threonine 482, and glutamate 486.

It belongs to the terpene synthase family. Tpsb subfamily. It depends on Mg(2+) as a cofactor. Requires Mn(2+) as cofactor.

The protein resides in the plastid. Its subcellular location is the chloroplast. The enzyme catalyses (2E)-geranyl diphosphate = sabinene + diphosphate. The catalysed reaction is (2E)-geranyl diphosphate = beta-myrcene + diphosphate. It functions in the pathway secondary metabolite biosynthesis; terpenoid biosynthesis. In terms of biological role, monoterpene synthase (TPS) involved in the biosynthesis of monoterpene natural products, components of the chemical defense arsenal. Catalyzes the conversion of (2E)-geranyl diphosphate (GPP) into sabinene, and, as minor products, myrcene. The protein is Sabinene synthase 1, chloroplastic of Salvia pomifera (Apple sage).